The primary structure comprises 637 residues: Biosynthetic arginine decarboxylase (637 aa).

At K110 the chain carries N6-(pyridoxal phosphate)lysine. 290–300 (IDVGGGLGVDY) contacts substrate.

Belongs to the Orn/Lys/Arg decarboxylase class-II family. SpeA subfamily. Requires Mg(2+) as cofactor. Pyridoxal 5'-phosphate serves as cofactor.

It carries out the reaction L-arginine + H(+) = agmatine + CO2. Its function is as follows. Catalyzes the biosynthesis of agmatine from arginine. This Pseudomonas putida (strain ATCC 47054 / DSM 6125 / CFBP 8728 / NCIMB 11950 / KT2440) protein is Biosynthetic arginine decarboxylase.